The following is a 2009-amino-acid chain: Sodium channel protein type 1 subunit alpha (2009 aa).

Over 1–128 (MEQTVLVPPG…KIAIKILVHS (128 aa)) the chain is Cytoplasmic. The segment covering 28-48 (RIAEEKAKNPKPDKKDDDENG) has biased composition (basic and acidic residues). A disordered region spans residues 28-60 (RIAEEKAKNPKPDKKDDDENGPKPNSDLEAGKN). The I repeat unit spans residues 110-454 (ILTPFNPLRK…QQMLEQLKKQ (345 aa)). A helical membrane pass occupies residues 129 to 146 (LFSMLIMCTILTNCVFMT). Residues 147–152 (MSNPPD) are Extracellular-facing. Residues 153–177 (WTKNVEYTFTGIYTFESLIKIIARG) traverse the membrane as a helical segment. Over 178-188 (FCLEDFTFLRD) the chain is Cytoplasmic. Residues 189-205 (PWNWLDFTVITFAYVTE) form a helical membrane-spanning segment. Residues 206–213 (FVDLGNVS) are Extracellular-facing. Residues 214–235 (ALRTFRVLRALKTISVIPGLKT) form a helical membrane-spanning segment. At 236–245 (IVGALIQSVK) the chain is on the cytoplasmic side. A helical transmembrane segment spans residues 246-269 (KLSDVMILTVFCLSVFALIGLQLF). Over 270–369 (MGNLRNKCVQ…YGYTSFDTFS (100 aa)) the chain is Extracellular. 2 disulfide bridges follow: C277–C345 and C336–C351. N-linked (GlcNAc...) asparagine glycosylation is found at N295, N301, N306, and N338. The segment at residues 370 to 384 (WAFLSLFRLMTQDFW) is an intramembrane region (pore-forming). Residues 385–397 (ENLYQLTLRAAGK) are Extracellular-facing. Residues 398–423 (TYMIFFVLVIFLGSFYLINLILAVVA) traverse the membrane as a helical segment. The Cytoplasmic segment spans residues 424-768 (MAYEEQNQAT…HIVNLVVMDP (345 aa)). Residues 455–528 (QEAAQQAAAT…EFHKSESEDS (74 aa)) are disordered. Low complexity predominate over residues 456 to 466 (EAAQQAAATTA). Phosphoserine is present on S470. Positions 479-492 (LSDSSSEASKLSSK) are enriched in low complexity. The segment covering 495–506 (KERRNRRKKRKQ) has biased composition (basic residues). Basic and acidic residues predominate over residues 507–528 (KEQSGGEEKDDDEFHKSESEDS). 6 positions are modified to phosphoserine: S523, S525, S550, S551, S607, and S730. The interval 584–627 (VGSENDFADDEHSTFEDNESRRDSLFVPRRHGERRNSNLSQTSR) is disordered. The span at 593–607 (DEHSTFEDNESRRDS) shows a compositional bias: basic and acidic residues. An II repeat occupies 750–1022 (CSPYWLKVKH…QIAVDRMHKG (273 aa)). The helical transmembrane segment at 769–787 (FVDLAITICIVLNTLFMAM) threads the bilayer. Topologically, residues 788–797 (EHYPMTEHFN) are extracellular. The helical transmembrane segment at 798–820 (HVLTVGNLVFTGIFTAEMFLKII) threads the bilayer. Over 821–830 (AMDPYYYFQE) the chain is Cytoplasmic. A helical transmembrane segment spans residues 831–849 (GWNIFDGFIVTLSLVELGL). The Extracellular segment spans residues 850–854 (ANVEG). Residues 855–874 (LSVLRSFRLLRVFKLAKSWP) traverse the membrane as a helical segment. At 875–891 (TLNMLIKIIGNSVGALG) the chain is on the cytoplasmic side. The chain crosses the membrane as a helical span at residues 892-912 (NLTLVLAIIVFIFAVVGMQLF). The Extracellular portion of the chain corresponds to 913-938 (GKSYKDCVCKIATDCKLPRWHMNDFF). C921 and C927 form a disulfide bridge. Positions 939–952 (HSFLIVFRVLCGEW) form an intramembrane region, pore-forming. The Extracellular portion of the chain corresponds to 953-965 (IETMWDCMEVAGQ). A disulfide bridge links C959 with C968. A helical membrane pass occupies residues 966–992 (AMCLTVFMMVMVIGNLVVLNLFLALLL). Residues 993–1218 (SSFSADNLAA…RTCFRIVEHN (226 aa)) lie on the Cytoplasmic side of the membrane. Residues 1129 to 1163 (TEDFSSESDLEESKEKLNESSSSSEGSTVDIGAPA) are disordered. The III repeat unit spans residues 1200–1514 (RGKQWWNLRR…KKYYNAMKKL (315 aa)). The helical transmembrane segment at 1219-1237 (WFETFIVFMILLSSGALAF) threads the bilayer. The Extracellular portion of the chain corresponds to 1238–1250 (EDIYIDQRKTIKT). Residues 1251 to 1276 (MLEYADKVFTYIFILEMLLKWVAYGY) form a helical membrane-spanning segment. The Cytoplasmic segment spans residues 1277–1278 (QT). A helical transmembrane segment spans residues 1279-1304 (YFTNAWCWLDFLIVDVSLVSLTANAL). Topologically, residues 1305–1313 (GYSELGAIK) are extracellular. A helical membrane pass occupies residues 1314-1332 (SLRTLRALRPLRALSRFEG). Residues 1333-1345 (MRVVVNALLGAIP) are Cytoplasmic-facing. The helical transmembrane segment at 1346–1369 (SIMNVLLVCLIFWLIFSIMGVNLF) threads the bilayer. Residues 1370–1415 (AGKFYHCVNTTTGDIFEISEVNNHSDCLKLIERNETARWKNVKVNF) lie on the Extracellular side of the membrane. A disulfide bond links C1376 and C1396. Residues 1416 to 1433 (DNVGFGYLSLLQVATFKG) constitute an intramembrane region (pore-forming). At 1434–1457 (WMDIMYAAVDSRNVELQPKYEESL) the chain is on the extracellular side. Residues 1458–1483 (YMYLYFVIFIIFGSFFTLNLFIGVII) traverse the membrane as a helical segment. Residues 1484-1541 (DNFNQQKKKFGGQDIFMTEEQKKYYNAMKKLGSKKPQKPIPRPGNKFQGMVFDFVTRQ) are Cytoplasmic-facing. S1516 is subject to Phosphoserine; by PKC. The stretch at 1523 to 1821 (IPRPGNKFQG…WEKFDPDATQ (299 aa)) is one IV repeat. A helical membrane pass occupies residues 1542–1560 (VFDISIMILICLNMVTMMV). The Extracellular segment spans residues 1561-1571 (ETDDQSDYVTS). The tract at residues 1561-1571 (ETDDQSDYVTS) is S1-S2 loop of repeat IV. Residues 1572–1593 (ILSRINLVFIVLFTGECVLKLI) traverse the membrane as a helical segment. The Cytoplasmic portion of the chain corresponds to 1594–1601 (SLRHYYFT). The helical transmembrane segment at 1602-1623 (IGWNIFDFVVVILSIVGMFLAE) threads the bilayer. Residues 1619 to 1636 (MFLAELIEKYFVSPTLFR) form an S3b-S4 loop of repeat IV region. Residues 1624 to 1636 (LIEKYFVSPTLFR) are Extracellular-facing. The chain crosses the membrane as a helical span at residues 1637 to 1655 (VIRLARIGRILRLIKGAKG). Topologically, residues 1656–1665 (IRTLLFALMM) are cytoplasmic. Residues 1666 to 1688 (SLPALFNIGLLLFLVMFIYAIFG) form a helical membrane-spanning segment. At 1689–1711 (MSNFAYVKREVGIDDMFNFETFG) the chain is on the extracellular side. An intramembrane region (pore-forming) is located at residues 1712–1726 (NSMICLFQITTSAGW). The Extracellular segment spans residues 1727–1759 (DGLLAPILNSKPPDCDPNKVNPGSSVKGDCGNP). C1741 and C1756 are disulfide-bonded. The helical transmembrane segment at 1760–1788 (SVGIFFFVSYIIISFLVVVNMYIAVILEN) threads the bilayer. Over 1789–2009 (FSVATEESAE…EGKDEKAKGK (221 aa)) the chain is Cytoplasmic. Positions 1915-1944 (EEVSAVIIQRAYRRHLLKRTVKQASFTYNK) constitute an IQ domain. The tract at residues 1984 to 2009 (PSYDRVTKPIVEKHEQEGKDEKAKGK) is disordered. Positions 1988–2009 (RVTKPIVEKHEQEGKDEKAKGK) are enriched in basic and acidic residues.

This sequence belongs to the sodium channel (TC 1.A.1.10) family. Nav1.1/SCN1A subfamily. As to quaternary structure, the Nav1.1 voltage-gated sodium channel consists of an ion-conducting alpha subunit SCN1A which is functional on its own regulated by one or more beta-1 (SCN1B), beta-2 (SCN2B), beta-3 (SCN3B) and beta-4 (SCN4B) subunits. SCN1B and SCN3B are non-covalently associated with SCN1A. SCN2B and SCN4B are disulfide-linked to SCN1A. SCN1B regulates both the expression at the plasma membrane and the voltage dependence of Nav1.1 inactivation. SCN3B and SCN4B reduce Nav1.1 conductance. Probably interacts with TMEM233; modulates the gating properties of NaV1.1. Interacts with FGF13; regulates the steady-state inactivation of Nav.1.1. Post-translationally, phosphorylation at Ser-1516 by PKC in a highly conserved cytoplasmic loop slows inactivation of the sodium channel and reduces peak sodium currents. Present in cerebellar Purkinje neurons (at protein level). Expressed by myelinated, non-C-fiber neurons in sensory ganglia.

It is found in the cell membrane. The catalysed reaction is Na(+)(in) = Na(+)(out). Its activity is regulated as follows. Activated by the spider toxins Hm1a and Hm1b (H.maculata, AC P60992 and AC P0DOC5) eliciting acute pain and mechanical allodynia. Its function is as follows. Pore-forming subunit of Nav1.1, a voltage-gated sodium (Nav) channel that directly mediates the depolarizing phase of action potentials in excitable membranes. Navs, also called VGSCs (voltage-gated sodium channels) or VDSCs (voltage-dependent sodium channels), operate by switching between closed and open conformations depending on the voltage difference across the membrane. In the open conformation they allow Na(+) ions to selectively pass through the pore, along their electrochemical gradient. The influx of Na(+) ions provokes membrane depolarization, initiating the propagation of electrical signals throughout cells and tissues. By regulating the excitability of neurons, ensures that they respond appropriately to synaptic inputs, maintaining the balance between excitation and inhibition in brain neural circuits. Nav1.1 plays a role in controlling the excitability and action potential propagation from somatosensory neurons, thereby contributing to the sensory perception of mechanically-induced pain. This chain is Sodium channel protein type 1 subunit alpha, found in Mus musculus (Mouse).